A 146-amino-acid polypeptide reads, in one-letter code: Mu-like prophage FluMu G protein 1 (146 aa).

The protein to phage Mu protein G.

In Haemophilus influenzae (strain ATCC 51907 / DSM 11121 / KW20 / Rd), this protein is Mu-like prophage FluMu G protein 1.